We begin with the raw amino-acid sequence, 85 residues long: UPF0386 protein MXAN_1729 (85 aa).

Belongs to the UPF0386 family.

In Myxococcus xanthus (strain DK1622), this protein is UPF0386 protein MXAN_1729.